A 68-amino-acid polypeptide reads, in one-letter code: DNA-directed RNA polymerase subunit omega (68 aa).

Belongs to the RNA polymerase subunit omega family. The RNAP catalytic core consists of 2 alpha, 1 beta, 1 beta' and 1 omega subunit. When a sigma factor is associated with the core the holoenzyme is formed, which can initiate transcription.

It carries out the reaction RNA(n) + a ribonucleoside 5'-triphosphate = RNA(n+1) + diphosphate. Its function is as follows. Promotes RNA polymerase assembly. Latches the N- and C-terminal regions of the beta' subunit thereby facilitating its interaction with the beta and alpha subunits. This chain is DNA-directed RNA polymerase subunit omega, found in Trichlorobacter lovleyi (strain ATCC BAA-1151 / DSM 17278 / SZ) (Geobacter lovleyi).